Consider the following 314-residue polypeptide: DNA-directed RNA polymerase subunit alpha (314 aa).

The tract at residues 1-228 is alpha N-terminal domain (alpha-NTD); sequence MIEIEKPKIE…EHLNIFVGLT (228 aa). The interval 245–314 is alpha C-terminal domain (alpha-CTD); the sequence is KEKVMEMTIE…DLGLGLRDDD (70 aa).

It belongs to the RNA polymerase alpha chain family. As to quaternary structure, homodimer. The RNAP catalytic core consists of 2 alpha, 1 beta, 1 beta' and 1 omega subunit. When a sigma factor is associated with the core the holoenzyme is formed, which can initiate transcription.

The enzyme catalyses RNA(n) + a ribonucleoside 5'-triphosphate = RNA(n+1) + diphosphate. In terms of biological role, DNA-dependent RNA polymerase catalyzes the transcription of DNA into RNA using the four ribonucleoside triphosphates as substrates. This chain is DNA-directed RNA polymerase subunit alpha, found in Oceanobacillus iheyensis (strain DSM 14371 / CIP 107618 / JCM 11309 / KCTC 3954 / HTE831).